We begin with the raw amino-acid sequence, 582 residues long: Vesicular glutamate transporter 2 (582 aa).

Topologically, residues 1–71 (MESVKQRILA…CTCFGLPRRY (71 aa)) are cytoplasmic. Residues 72-92 (IIAIMSGLGFCISFGIRCNLG) form a helical membrane-spanning segment. Topologically, residues 93 to 125 (VAIVDMVNNSTIHRGGKVIKEKAKFNWDPETVG) are vesicular. 2 N-linked (GlcNAc...) asparagine glycosylation sites follow: Asn-100 and Asn-101. Residues 126 to 146 (MIHGSFFWGYIITQIPGGYIA) form a helical membrane-spanning segment. Residues 147–148 (SR) are Cytoplasmic-facing. Residues 149-169 (LAANRVFGAAILLTSTLNMLI) traverse the membrane as a helical segment. Residues 170 to 177 (PSAARVHY) lie on the Vesicular side of the membrane. A helical transmembrane segment spans residues 178–198 (GCVIFVRILQGLVEGVTYPAC). Residues 199–216 (HGIWSKWAPPLERSRLAT) are Cytoplasmic-facing. The chain crosses the membrane as a helical span at residues 217–237 (TSFCGSYAGAVIAMPLAGILV). Residues 238–244 (QYTGWSS) lie on the Vesicular side of the membrane. A helical transmembrane segment spans residues 245–265 (VFYVYGSFGMVWYMFWLLVSY). At 266–310 (ESPAKHPTITDEERRYIEESIGESANLLGAMEKFKTPWRKFFTSM) the chain is on the cytoplasmic side. A helical membrane pass occupies residues 311-331 (PVYAIIVANFCRSWTFYLLLI). At 332 to 349 (SQPAYFEEVFGFEISKVG) the chain is on the vesicular side. The helical transmembrane segment at 350–370 (MLSAVPHLVMTIIVPIGGQIA) threads the bilayer. The Cytoplasmic portion of the chain corresponds to 371–386 (DFLRSKQILSTTTVRK). Residues 387–407 (IMNCGGFGMEATLLLVVGYSH) traverse the membrane as a helical segment. Residues 408–409 (TR) lie on the Vesicular side of the membrane. The helical transmembrane segment at 410–430 (GVAISFLVLAVGFSGFAISGF) threads the bilayer. The Cytoplasmic portion of the chain corresponds to 431-443 (NVNHLDIAPRYAS). The chain crosses the membrane as a helical span at residues 444–464 (ILMGISNGVGTLSGMVCPIIV). Residues 465–477 (GAMTKNKSREEWQ) are Vesicular-facing. A glycan (N-linked (GlcNAc...) asparagine) is linked at Asn-470. The helical transmembrane segment at 478–498 (YVFLIAALVHYGGVIFYAIFA) threads the bilayer. Residues 499 to 582 (SGEKQPWADP…HSYKDRVDYS (84 aa)) lie on the Cytoplasmic side of the membrane.

Belongs to the major facilitator superfamily. Sodium/anion cotransporter family. VGLUT subfamily. Predominantly expressed in adult brain. Expressed in amygdala, caudate nucleus, cerebral cortex, frontal lobe, hippocampus, medulla, occipital lobe, putamen, spinal cord, substantia nigra, subthalamic nucleus, temporal lobe and thalamus.

The protein resides in the cytoplasmic vesicle. The protein localises to the secretory vesicle. It localises to the synaptic vesicle membrane. Its subcellular location is the synapse. It is found in the synaptosome. The protein resides in the cell membrane. It carries out the reaction L-glutamate(out) = L-glutamate(in). The catalysed reaction is 3 Na(+)(out) + phosphate(out) = 3 Na(+)(in) + phosphate(in). It catalyses the reaction phosphate(in) = phosphate(out). The enzyme catalyses K(+)(in) + H(+)(out) = K(+)(out) + H(+)(in). It carries out the reaction chloride(in) = chloride(out). Chloride channel activity is allosterically activated by lumenal H(+) and Cl(-) leading to synaptic vesicles acidification. The L-glutamate transport activity is allosterically activated by lumenal H(+) and Cl(-). The allosteric requirement for H(+) efficiently prevents non-vesicular efflux across the plasma membrane. The L-glutamate uniporter activity exhibits a biphasic dependence on chloride concentration. Its function is as follows. Multifunctional transporter that transports L-glutamate as well as multiple ions such as chloride, proton, potassium, sodium and phosphate. At the synaptic vesicle membrane, mainly functions as a uniporter which transports preferentially L-glutamate but also, phosphate from the cytoplasm into synaptic vesicles at presynaptic nerve terminals of excitatory neural cells. The L-glutamate or phosphate uniporter activity is electrogenic and is driven by the proton electrochemical gradient, mainly by the electrical gradient established by the vacuolar H(+)-ATPase across the synaptic vesicle membrane. In addition, functions as a chloride channel that allows the chloride permeation through the synaptic vesicle membrane therefore affects the proton electrochemical gradient and promotes synaptic vesicles acidification. Moreover, functions as a vesicular K(+)/H(+) antiport allowing to maintain the electrical gradient and to decrease chemical gradient and therefore sustain vesicular glutamate uptake. The vesicular H(+)/H(+) antiport activity is electroneutral. At the plasma membrane, following exocytosis, functions as a symporter of Na(+) and phosphate from the extracellular space to the cytoplasm allowing synaptic phosphate homeostasis regulation. The symporter activity is driven by an inside negative membrane potential and is electrogenic. Also involved in the regulation of retinal hyaloid vessel regression during postnatal development. May also play a role in the endocrine glutamatergic system of other tissues such as pineal gland and pancreas. The protein is Vesicular glutamate transporter 2 of Homo sapiens (Human).